The sequence spans 270 residues: Glucosamine-6-phosphate deaminase (270 aa).

Aspartate 68 functions as the Proton acceptor; for enolization step in the catalytic mechanism. Aspartate 145 (for ring-opening step) is an active-site residue. The active-site Proton acceptor; for ring-opening step is the histidine 147. The active-site For ring-opening step is glutamate 152.

Belongs to the glucosamine/galactosamine-6-phosphate isomerase family. NagB subfamily.

The enzyme catalyses alpha-D-glucosamine 6-phosphate + H2O = beta-D-fructose 6-phosphate + NH4(+). Its pathway is amino-sugar metabolism; N-acetylneuraminate degradation; D-fructose 6-phosphate from N-acetylneuraminate: step 5/5. Catalyzes the reversible isomerization-deamination of glucosamine 6-phosphate (GlcN6P) to form fructose 6-phosphate (Fru6P) and ammonium ion. This Bifidobacterium longum (strain NCC 2705) protein is Glucosamine-6-phosphate deaminase.